A 300-amino-acid polypeptide reads, in one-letter code: uncharacterized protein (300 aa).

Serine 49 (charge relay system) is an active-site residue. Catalysis depends on tyrosine 137, which acts as the Proton donor. Lysine 165 acts as the Schiff-base intermediate with substrate in catalysis.

It belongs to the DapA family. As to quaternary structure, homotetramer.

The protein localises to the cytoplasm. Functionally, upon expression in E.coli complements a dapA deletion mutation, but this may not be its physiological function. This is an uncharacterized protein from Rhizobium meliloti (Ensifer meliloti).